We begin with the raw amino-acid sequence, 256 residues long: Ubiquinone/menaquinone biosynthesis C-methyltransferase UbiE (256 aa).

S-adenosyl-L-methionine is bound by residues threonine 79, aspartate 100, and 128-129; that span reads DA.

This sequence belongs to the class I-like SAM-binding methyltransferase superfamily. MenG/UbiE family.

The catalysed reaction is a 2-demethylmenaquinol + S-adenosyl-L-methionine = a menaquinol + S-adenosyl-L-homocysteine + H(+). It catalyses the reaction a 2-methoxy-6-(all-trans-polyprenyl)benzene-1,4-diol + S-adenosyl-L-methionine = a 5-methoxy-2-methyl-3-(all-trans-polyprenyl)benzene-1,4-diol + S-adenosyl-L-homocysteine + H(+). It participates in quinol/quinone metabolism; menaquinone biosynthesis; menaquinol from 1,4-dihydroxy-2-naphthoate: step 2/2. It functions in the pathway cofactor biosynthesis; ubiquinone biosynthesis. Methyltransferase required for the conversion of demethylmenaquinol (DMKH2) to menaquinol (MKH2) and the conversion of 2-polyprenyl-6-methoxy-1,4-benzoquinol (DDMQH2) to 2-polyprenyl-3-methyl-6-methoxy-1,4-benzoquinol (DMQH2). This Ectopseudomonas mendocina (strain ymp) (Pseudomonas mendocina) protein is Ubiquinone/menaquinone biosynthesis C-methyltransferase UbiE.